An 88-amino-acid chain; its full sequence is Small ribosomal subunit protein uS15 (88 aa).

The protein belongs to the universal ribosomal protein uS15 family. As to quaternary structure, part of the 30S ribosomal subunit. Forms a bridge to the 50S subunit in the 70S ribosome, contacting the 23S rRNA.

Functionally, one of the primary rRNA binding proteins, it binds directly to 16S rRNA where it helps nucleate assembly of the platform of the 30S subunit by binding and bridging several RNA helices of the 16S rRNA. Its function is as follows. Forms an intersubunit bridge (bridge B4) with the 23S rRNA of the 50S subunit in the ribosome. In Geobacter sulfurreducens (strain ATCC 51573 / DSM 12127 / PCA), this protein is Small ribosomal subunit protein uS15.